The chain runs to 368 residues: Quinolinate synthase (368 aa).

2 residues coordinate iminosuccinate: His46 and Ser63. Cys110 lines the [4Fe-4S] cluster pocket. Residues Tyr141–Asn143 and Ser162 each bind iminosuccinate. A [4Fe-4S] cluster-binding site is contributed by Cys230. Iminosuccinate-binding positions include His256–Glu258 and Thr273. Residue Cys320 participates in [4Fe-4S] cluster binding.

The protein belongs to the quinolinate synthase family. Type 3 subfamily. It depends on [4Fe-4S] cluster as a cofactor.

The protein localises to the cytoplasm. The enzyme catalyses iminosuccinate + dihydroxyacetone phosphate = quinolinate + phosphate + 2 H2O + H(+). It participates in cofactor biosynthesis; NAD(+) biosynthesis; quinolinate from iminoaspartate: step 1/1. Its function is as follows. Catalyzes the condensation of iminoaspartate with dihydroxyacetone phosphate to form quinolinate. This chain is Quinolinate synthase, found in Bacillus cereus (strain ZK / E33L).